The primary structure comprises 591 residues: Indole-3-acetic acid-amido synthetase GH3.10 (591 aa).

The protein belongs to the IAA-amido conjugating enzyme family. In terms of tissue distribution, expressed in cotyledons and hypocotyls.

Its function is as follows. Catalyzes the synthesis of indole-3-acetic acid (IAA)-amino acid conjugates, providing a mechanism for the plant to cope with the presence of excess auxin. Involved in red light-specific hypocotyl elongation. May act downstream of a red light signal transduction and determine the degree of hypocotyl elongation. In Arabidopsis thaliana (Mouse-ear cress), this protein is Indole-3-acetic acid-amido synthetase GH3.10.